Consider the following 183-residue polypeptide: MISHTDHQLTLIKENIKFIPNYPKQGILFRDITALLENPHAYSACIKLLADHYKNHQLTKIVGVEARGFLFGSPLALILKLGFIPARKAGRLPRNTISESYVLEYGTGCLEMHNDSIIPGDRVLIVDDLLATGGTIKAVVKLIRRLGGEVYHAAFVIDLEKLGGKLLLEKIGVHPYSLVIFSD.

This sequence belongs to the purine/pyrimidine phosphoribosyltransferase family. In terms of assembly, homodimer.

It localises to the cytoplasm. It carries out the reaction AMP + diphosphate = 5-phospho-alpha-D-ribose 1-diphosphate + adenine. The protein operates within purine metabolism; AMP biosynthesis via salvage pathway; AMP from adenine: step 1/1. Functionally, catalyzes a salvage reaction resulting in the formation of AMP, that is energically less costly than de novo synthesis. This chain is Adenine phosphoribosyltransferase, found in Blochmanniella floridana.